A 213-amino-acid chain; its full sequence is Imidazole glycerol phosphate synthase subunit HisH 2 (213 aa).

Residues Arg4–Pro211 form the Glutamine amidotransferase type-1 domain. The active-site Nucleophile is the Cys82. Residues His186 and Glu188 contribute to the active site.

In terms of assembly, heterodimer of HisH and HisF.

The protein resides in the cytoplasm. The enzyme catalyses 5-[(5-phospho-1-deoxy-D-ribulos-1-ylimino)methylamino]-1-(5-phospho-beta-D-ribosyl)imidazole-4-carboxamide + L-glutamine = D-erythro-1-(imidazol-4-yl)glycerol 3-phosphate + 5-amino-1-(5-phospho-beta-D-ribosyl)imidazole-4-carboxamide + L-glutamate + H(+). The catalysed reaction is L-glutamine + H2O = L-glutamate + NH4(+). It functions in the pathway amino-acid biosynthesis; L-histidine biosynthesis; L-histidine from 5-phospho-alpha-D-ribose 1-diphosphate: step 5/9. IGPS catalyzes the conversion of PRFAR and glutamine to IGP, AICAR and glutamate. The HisH subunit provides the glutamine amidotransferase activity that produces the ammonia necessary to HisF for the synthesis of IGP and AICAR. This chain is Imidazole glycerol phosphate synthase subunit HisH 2 (hisH2), found in Prochlorococcus marinus (strain MIT 9313).